Here is a 59-residue protein sequence, read N- to C-terminus: MAVPKKKTSKGKRNQRHATWKGKAAVAAEKALSIGKSVLTGRAQGFVYPMNETSEEEAD.

Basic residues predominate over residues Met1–Trp20. Positions Met1–Gly22 are disordered.

This sequence belongs to the bacterial ribosomal protein bL32 family.

This Prochlorococcus marinus (strain NATL1A) protein is Large ribosomal subunit protein bL32.